We begin with the raw amino-acid sequence, 196 residues long: uncharacterized protein (196 aa).

The region spanning 58–163 is the Bro-N domain; sequence HKFFDAIKDS…IILPNNYHKN (106 aa).

This is an uncharacterized protein from Acanthamoeba polyphaga mimivirus (APMV).